Reading from the N-terminus, the 232-residue chain is Orotidine 5'-phosphate decarboxylase (232 aa).

Substrate-binding positions include Asp-16, Lys-38, 65-74 (DLKLHDIGNT), Thr-119, Arg-180, Gln-189, Gly-209, and Arg-210. The active-site Proton donor is Lys-67.

Belongs to the OMP decarboxylase family. Type 1 subfamily. In terms of assembly, homodimer.

It carries out the reaction orotidine 5'-phosphate + H(+) = UMP + CO2. Its pathway is pyrimidine metabolism; UMP biosynthesis via de novo pathway; UMP from orotate: step 2/2. Its function is as follows. Catalyzes the decarboxylation of orotidine 5'-monophosphate (OMP) to uridine 5'-monophosphate (UMP). This Methylorubrum extorquens (strain PA1) (Methylobacterium extorquens) protein is Orotidine 5'-phosphate decarboxylase.